Consider the following 502-residue polypeptide: Glycerol kinase (502 aa).

Residue threonine 12 participates in ADP binding. Threonine 12, threonine 13, and serine 14 together coordinate ATP. Threonine 12 is a binding site for sn-glycerol 3-phosphate. Position 16 (arginine 16) interacts with ADP. The sn-glycerol 3-phosphate site is built by arginine 82, glutamate 83, tyrosine 134, and aspartate 243. The glycerol site is built by arginine 82, glutamate 83, tyrosine 134, aspartate 243, and glutamine 244. 2 residues coordinate ADP: threonine 265 and glycine 308. Residues threonine 265, glycine 308, glutamine 312, and glycine 412 each coordinate ATP. Glycine 412 lines the ADP pocket.

This sequence belongs to the FGGY kinase family.

The enzyme catalyses glycerol + ATP = sn-glycerol 3-phosphate + ADP + H(+). It participates in polyol metabolism; glycerol degradation via glycerol kinase pathway; sn-glycerol 3-phosphate from glycerol: step 1/1. Its activity is regulated as follows. Inhibited by fructose 1,6-bisphosphate (FBP). Key enzyme in the regulation of glycerol uptake and metabolism. Catalyzes the phosphorylation of glycerol to yield sn-glycerol 3-phosphate. In Methylobacterium nodulans (strain LMG 21967 / CNCM I-2342 / ORS 2060), this protein is Glycerol kinase.